A 96-amino-acid polypeptide reads, in one-letter code: Large ribosomal subunit protein eL14 (96 aa).

It belongs to the eukaryotic ribosomal protein eL14 family.

This chain is Large ribosomal subunit protein eL14, found in Sulfolobus acidocaldarius (strain ATCC 33909 / DSM 639 / JCM 8929 / NBRC 15157 / NCIMB 11770).